A 115-amino-acid polypeptide reads, in one-letter code: Large ribosomal subunit protein bL31B (115 aa).

Belongs to the bacterial ribosomal protein bL31 family. Type B subfamily. Part of the 50S ribosomal subunit.

The polypeptide is Large ribosomal subunit protein bL31B (Polynucleobacter asymbioticus (strain DSM 18221 / CIP 109841 / QLW-P1DMWA-1) (Polynucleobacter necessarius subsp. asymbioticus)).